The chain runs to 489 residues: Glycogen synthase (489 aa).

Arginine 20 contacts ADP-alpha-D-glucose.

Belongs to the glycosyltransferase 1 family. Bacterial/plant glycogen synthase subfamily.

The enzyme catalyses [(1-&gt;4)-alpha-D-glucosyl](n) + ADP-alpha-D-glucose = [(1-&gt;4)-alpha-D-glucosyl](n+1) + ADP + H(+). Its pathway is glycan biosynthesis; glycogen biosynthesis. Functionally, synthesizes alpha-1,4-glucan chains using ADP-glucose. This chain is Glycogen synthase, found in Chlorobium phaeovibrioides (strain DSM 265 / 1930) (Prosthecochloris vibrioformis (strain DSM 265)).